The primary structure comprises 1390 residues: DNA-directed RNA polymerase subunit beta'' (1390 aa).

4 residues coordinate Zn(2+): cysteine 224, cysteine 295, cysteine 302, and cysteine 305.

Belongs to the RNA polymerase beta' chain family. RpoC2 subfamily. As to quaternary structure, in plastids the minimal PEP RNA polymerase catalytic core is composed of four subunits: alpha, beta, beta', and beta''. When a (nuclear-encoded) sigma factor is associated with the core the holoenzyme is formed, which can initiate transcription. Zn(2+) serves as cofactor.

It is found in the plastid. The protein localises to the chloroplast. It carries out the reaction RNA(n) + a ribonucleoside 5'-triphosphate = RNA(n+1) + diphosphate. In terms of biological role, DNA-dependent RNA polymerase catalyzes the transcription of DNA into RNA using the four ribonucleoside triphosphates as substrates. This chain is DNA-directed RNA polymerase subunit beta'', found in Daucus carota (Wild carrot).